Consider the following 369-residue polypeptide: Transaldolase (369 aa).

The active-site Schiff-base intermediate with substrate is Lys140.

It belongs to the transaldolase family. Type 2 subfamily.

The protein resides in the cytoplasm. It carries out the reaction D-sedoheptulose 7-phosphate + D-glyceraldehyde 3-phosphate = D-erythrose 4-phosphate + beta-D-fructose 6-phosphate. Its pathway is carbohydrate degradation; pentose phosphate pathway; D-glyceraldehyde 3-phosphate and beta-D-fructose 6-phosphate from D-ribose 5-phosphate and D-xylulose 5-phosphate (non-oxidative stage): step 2/3. In terms of biological role, transaldolase is important for the balance of metabolites in the pentose-phosphate pathway. This chain is Transaldolase, found in Parafrankia sp. (strain EAN1pec).